We begin with the raw amino-acid sequence, 35 residues long: Z-limacoditoxin(1)-Dv4 (35 aa).

Residues 1-22 (MKKTFLPIFLVILLASYALGNP) form the signal peptide. At Gln23 the chain carries Pyrrolidone carboxylic acid. The residue at position 32 (Pro32) is a Proline amide.

It belongs to the limacoditoxin-1 (ACP-like) family. In terms of tissue distribution, expressed by the venom secretory cell of the spine. The spine is a cuticular structure containing a single large nucleated venom-secreting cell at its base. It is an independent unit capable of producing, storing and injecting venom. On the back of D.vulnerans caterpillars, spines are grouped together by 50 to 100 to form scoli, of which there are eight in D.vulnerans.

The protein resides in the secreted. Functionally, potently activates insect GPCR. More precisely, it activates the ACP receptor (ACPR) from the mosquito A.aegypti (EC(50)=3.07 nM) with a potency comparable to that of the endogenous ligand. Has no activity on receptors of the closely related neuropeptides adipokinetic hormone and corazonin. In vivo, does not reveal any observable effects when injected into crickets (A.domesticus). Does not induce increase in intracellular calcium in mouse DRG neurons, suggesting that it does not induce pain. The sequence is that of Z-limacoditoxin(1)-Dv4 from Doratifera vulnerans (Mottled cup moth).